We begin with the raw amino-acid sequence, 178 residues long: 2-oxo-4-hydroxy-4-carboxy-5-ureidoimidazoline decarboxylase (178 aa).

The Proton donor role is filled by histidine 67. Residues proline 68, 84–88 (SQREQ), and 119–123 (FVLAA) contribute to the substrate site.

It belongs to the OHCU decarboxylase family.

The protein localises to the peroxisome. It catalyses the reaction 5-hydroxy-2-oxo-4-ureido-2,5-dihydro-1H-imidazole-5-carboxylate + H(+) = (S)-allantoin + CO2. The protein operates within purine metabolism; urate degradation; (S)-allantoin from urate: step 3/3. Functionally, catalyzes the stereoselective decarboxylation of 2-oxo-4-hydroxy-4-carboxy-5-ureidoimidazoline (OHCU) to (S)-allantoin. This Mus musculus (Mouse) protein is 2-oxo-4-hydroxy-4-carboxy-5-ureidoimidazoline decarboxylase (Urad).